We begin with the raw amino-acid sequence, 250 residues long: Testis-expressed protein 101 (250 aa).

The signal sequence occupies residues 1–25 (MGACRIQYVLLIFLLIASRWTLVQN). N-linked (GlcNAc...) asparagine glycosylation is found at Asn45, Asn110, Asn134, and Asn160. The 75-residue stretch at 141 to 215 (CPTCVALGSC…VKETCSYQSF (75 aa)) folds into the UPAR/Ly6 domain. The GPI-anchor amidated glycine moiety is linked to residue Gly224. Residues 225–250 (ASQMPTSLWVLELLFPLLLLPLTHFP) constitute a propeptide, removed in mature form.

In terms of assembly, interacts with VAMP3. Interacts with LY6K. Interacts with DPEP3; co-localized on the cell surface of spermatocytes, spermatids, and testicular spermatozoa, co-localized only in cytoplasmic droplets of caput and corpus epididymal sperm. Interacts with ADAM3; co-localized on sperm surface. Interacts with ADAM5. Post-translationally, N-glycosylated; by high mannose and/or biantennary complex and/or certain types of hybrid oligosaccharides; possesses different oligosaccharides chains according to its subcellular localization in the testis. Sheds from membrane raft by ACE and released from the cell surface of epididymal sperm while it passes through the caput epididymis leading to disappearance of TEX101 on spermatozoa; is essential to produce fertile spermatozoa. In terms of tissue distribution, detected in testis and ovary. Expressed in spermatocytes, spermatids and testicular spermatozoa, but not in spermatogonia or interstitial cells. Expressed abundantly in testicular germ cells (TGCs) but mostly disappeared from epididymal spermatozoa.

It localises to the cell membrane. It is found in the membrane raft. The protein resides in the cytoplasmic vesicle. The protein localises to the secretory vesicle. Its subcellular location is the acrosome. It localises to the secreted. Its function is as follows. Plays a role in fertilization by controlling binding of sperm to zona pellucida and migration of spermatozoa into the oviduct probably through molecule adhesion ADAM3. May play a role in signal transduction and promote protein tyrosine phosphorylation. This is Testis-expressed protein 101 from Mus musculus (Mouse).